Here is a 777-residue protein sequence, read N- to C-terminus: 1,4-alpha-glucan branching enzyme GlgB (777 aa).

Residue Asp408 is the Nucleophile of the active site. The active-site Proton donor is the Glu461.

This sequence belongs to the glycosyl hydrolase 13 family. GlgB subfamily. As to quaternary structure, monomer.

The catalysed reaction is Transfers a segment of a (1-&gt;4)-alpha-D-glucan chain to a primary hydroxy group in a similar glucan chain.. It participates in glycan biosynthesis; glycogen biosynthesis. In terms of biological role, catalyzes the formation of the alpha-1,6-glucosidic linkages in glycogen by scission of a 1,4-alpha-linked oligosaccharide from growing alpha-1,4-glucan chains and the subsequent attachment of the oligosaccharide to the alpha-1,6 position. The sequence is that of 1,4-alpha-glucan branching enzyme GlgB from Actinobacillus pleuropneumoniae serotype 5b (strain L20).